The primary structure comprises 436 residues: GTPase Der (436 aa).

2 EngA-type G domains span residues 4 to 167 and 176 to 351; these read PIVA…GEEE and IRLS…ENHK. Residues 10–17, 57–61, 119–122, 182–189, 229–233, and 294–297 each bind GTP; these read GRPNVGKS, DTGGI, NKVD, DTAGM, and NKWD. The KH-like domain maps to 352–436; the sequence is KRVQSSTLNE…PIHIIARKRN (85 aa).

It belongs to the TRAFAC class TrmE-Era-EngA-EngB-Septin-like GTPase superfamily. EngA (Der) GTPase family. Associates with the 50S ribosomal subunit.

Its function is as follows. GTPase that plays an essential role in the late steps of ribosome biogenesis. The protein is GTPase Der of Staphylococcus aureus (strain Mu3 / ATCC 700698).